A 100-amino-acid chain; its full sequence is Putative pterin-4-alpha-carbinolamine dehydratase (100 aa).

The protein belongs to the pterin-4-alpha-carbinolamine dehydratase family.

It catalyses the reaction (4aS,6R)-4a-hydroxy-L-erythro-5,6,7,8-tetrahydrobiopterin = (6R)-L-erythro-6,7-dihydrobiopterin + H2O. The polypeptide is Putative pterin-4-alpha-carbinolamine dehydratase (Bradyrhizobium sp. (strain ORS 278)).